The following is a 632-amino-acid chain: tRNA uridine 5-carboxymethylaminomethyl modification enzyme MnmG (632 aa).

Residues G15–G20, I127, and S182 contribute to the FAD site. An NAD(+)-binding site is contributed by G276–F290. Q373 lines the FAD pocket.

The protein belongs to the MnmG family. In terms of assembly, homodimer. Heterotetramer of two MnmE and two MnmG subunits. FAD is required as a cofactor.

The protein localises to the cytoplasm. Functionally, NAD-binding protein involved in the addition of a carboxymethylaminomethyl (cmnm) group at the wobble position (U34) of certain tRNAs, forming tRNA-cmnm(5)s(2)U34. The protein is tRNA uridine 5-carboxymethylaminomethyl modification enzyme MnmG of Streptococcus pyogenes serotype M12 (strain MGAS2096).